A 296-amino-acid chain; its full sequence is MNAEPERKFGVVVVGVGRAGSVRMRDLRNPHPSSAFLNLIGFVSRRELGSIDGVQQISLEDALSSQEVEVAYICSESSSHEDYIRQFLNAGKHVLVEYPMTLSLAAAQELWELAEQKGKVLHEEHVELLMEEFAFLKKEVVGKDLLKGSLLFTAGPLEEERFGFPAFSGISRLTWLVSLFGELSLVSATLEERKEDQYMKMTVCLETEKKSPLSWIEEKGPGLKRNRYLSFHFKSGSLENVPNVGVNKNIFLKDQNIFVQKLLGQFSEKELAAEKKRILHCLGLAEEIQKYCCSRK.

Positions 1 to 2 (MN) are excised as a propeptide. NADP(+) contacts are provided by residues 16 to 19 (VGRA), 44 to 46 (SRR), 77 to 80 (SSSH), and Tyr98. Thr174 bears the Phosphothreonine mark. 2 positions are modified to phosphoserine: Ser178 and Ser230. 2 positions are modified to N6-acetyllysine: Lys248 and Lys253. Residues His280, Cys281, Cys292, and Cys293 each contribute to the Zn(2+) site.

It belongs to the Gfo/Idh/MocA family. Biliverdin reductase subfamily. Monomer. Zn(2+) serves as cofactor. Liver.

It is found in the cytoplasm. It localises to the cytosol. It carries out the reaction (4Z,15Z)-bilirubin IXalpha + NAD(+) = biliverdin IXalpha + NADH + H(+). The catalysed reaction is (4Z,15Z)-bilirubin IXalpha + NADP(+) = biliverdin IXalpha + NADPH + H(+). Its pathway is porphyrin-containing compound metabolism; protoheme degradation. Functionally, reduces the gamma-methene bridge of the open tetrapyrrole, biliverdin IXalpha, to bilirubin with the concomitant oxidation of a NADH or NADPH cofactor. Does not reduce bilirubin IXbeta. Uses the reactants NADH or NADPH depending on the pH; NADH is used at the acidic pH range (6-6.9) and NADPH at the alkaline range (8.5-8.7). NADPH, however, is the probable reactant in biological systems. In Homo sapiens (Human), this protein is Biliverdin reductase A.